Consider the following 151-residue polypeptide: Probable ubiquitin-conjugating enzyme E2 W-A (151 aa).

Positions 3 to 151 (SMQKRLQKEL…TKWWYHDDTC (149 aa)) constitute a UBC core domain. Cys-91 serves as the catalytic Glycyl thioester intermediate.

This sequence belongs to the ubiquitin-conjugating enzyme family.

The protein localises to the nucleus. It carries out the reaction S-ubiquitinyl-[E1 ubiquitin-activating enzyme]-L-cysteine + [E2 ubiquitin-conjugating enzyme]-L-cysteine = [E1 ubiquitin-activating enzyme]-L-cysteine + S-ubiquitinyl-[E2 ubiquitin-conjugating enzyme]-L-cysteine.. The catalysed reaction is S-ubiquitinyl-[E1 ubiquitin-activating enzyme]-L-cysteine + [acceptor protein]-N-terminal-amino acid = [E1 ubiquitin-activating enzyme]-L-cysteine + N-terminal-ubiquitinyl-[acceptor protein].. Its pathway is protein modification; protein ubiquitination. Functionally, accepts ubiquitin from the E1 complex and catalyzes its covalent attachment to other proteins. Catalyzes monoubiquitination. Involved in degradation of misfolded chaperone substrate and DNA repair. This Danio rerio (Zebrafish) protein is Probable ubiquitin-conjugating enzyme E2 W-A (ube2wa).